An 87-amino-acid polypeptide reads, in one-letter code: MNSLLMITACLAEIGTVWAKEGYLVNKSTGCKYGCFWLGKNENCDKECKAKNQGGSYGYCYSFACWCEGLPDSTPTYPLPNKSCSKK.

The first 19 residues, 1–19 (MNSLLMITACLAEIGTVWA), serve as a signal peptide directing secretion. Residues 20–85 (KEGYLVNKST…TYPLPNKSCS (66 aa)) form the LCN-type CS-alpha/beta domain. Intrachain disulfides connect Cys-31-Cys-84, Cys-35-Cys-60, Cys-44-Cys-65, and Cys-48-Cys-67. The propeptide at 86–87 (KK) is removed by a carboxypeptidase.

Belongs to the long (4 C-C) scorpion toxin superfamily. Sodium channel inhibitor family. Beta subfamily. In terms of tissue distribution, expressed by the venom gland.

It localises to the secreted. Beta toxins bind voltage-independently at site-4 of sodium channels (Nav) and shift the voltage of activation toward more negative potentials thereby affecting sodium channel activation and promoting spontaneous and repetitive firing. The chain is Toxin Cll5b from Centruroides limpidus (Mexican scorpion).